A 689-amino-acid chain; its full sequence is Glycine--tRNA ligase beta subunit (689 aa).

It belongs to the class-II aminoacyl-tRNA synthetase family. As to quaternary structure, tetramer of two alpha and two beta subunits.

The protein localises to the cytoplasm. The catalysed reaction is tRNA(Gly) + glycine + ATP = glycyl-tRNA(Gly) + AMP + diphosphate. This Erwinia tasmaniensis (strain DSM 17950 / CFBP 7177 / CIP 109463 / NCPPB 4357 / Et1/99) protein is Glycine--tRNA ligase beta subunit.